Here is a 99-residue protein sequence, read N- to C-terminus: Aspartyl/glutamyl-tRNA(Asn/Gln) amidotransferase subunit C (99 aa).

Belongs to the GatC family. As to quaternary structure, heterotrimer of A, B and C subunits.

The catalysed reaction is L-glutamyl-tRNA(Gln) + L-glutamine + ATP + H2O = L-glutaminyl-tRNA(Gln) + L-glutamate + ADP + phosphate + H(+). The enzyme catalyses L-aspartyl-tRNA(Asn) + L-glutamine + ATP + H2O = L-asparaginyl-tRNA(Asn) + L-glutamate + ADP + phosphate + 2 H(+). In terms of biological role, allows the formation of correctly charged Asn-tRNA(Asn) or Gln-tRNA(Gln) through the transamidation of misacylated Asp-tRNA(Asn) or Glu-tRNA(Gln) in organisms which lack either or both of asparaginyl-tRNA or glutaminyl-tRNA synthetases. The reaction takes place in the presence of glutamine and ATP through an activated phospho-Asp-tRNA(Asn) or phospho-Glu-tRNA(Gln). This is Aspartyl/glutamyl-tRNA(Asn/Gln) amidotransferase subunit C from Leptothrix cholodnii (strain ATCC 51168 / LMG 8142 / SP-6) (Leptothrix discophora (strain SP-6)).